We begin with the raw amino-acid sequence, 467 residues long: Argininosuccinate lyase (467 aa).

It belongs to the lyase 1 family. Argininosuccinate lyase subfamily.

The protein localises to the cytoplasm. The catalysed reaction is 2-(N(omega)-L-arginino)succinate = fumarate + L-arginine. It participates in amino-acid biosynthesis; L-arginine biosynthesis; L-arginine from L-ornithine and carbamoyl phosphate: step 3/3. This Sinorhizobium fredii (strain NBRC 101917 / NGR234) protein is Argininosuccinate lyase.